Consider the following 254-residue polypeptide: MIGSVRVLVLLLAFIVTASAIGYSGGGYQPHSCDGDWPEKFPEAPKGFQFRCKCPCKCPPKSPTTTSISTSTVSTTPERLTKPYEETDTPIPTHSSPSTSTSTSTSTSTSTSTSRSTSTVTPTTRSSTTTTATSTPTSSSKATTTSAQITQPEIPQAAPGTVLKGEEFPVKQDGLGDGGVVHGPGTTFWIRSPTPPNIPLLVGGQSRLATVRPDSPYASDAALNPLNGGAGDMEFGIKNVGTPKTPRAVINPDA.

The segment at Pro60–Thr161 is disordered. Low complexity-rich tracts occupy residues Pro63–Pro77 and Thr89–Ser146.

This is an uncharacterized protein from Caenorhabditis elegans.